The primary structure comprises 970 residues: uncharacterized protein (970 aa).

The tract at residues Gln942 to His970 is disordered. Residues Ser953–His970 show a composition bias toward basic and acidic residues.

This is an uncharacterized protein from Frog virus 3 (isolate Goorha) (FV-3).